The primary structure comprises 795 residues: Phenylalanine--tRNA ligase beta subunit (795 aa).

In terms of domain architecture, tRNA-binding spans 39 to 148 (AGVFDGVKVG…ENAPIGMDFR (110 aa)). The B5 domain maps to 401-476 (PKPNQVALRR…RIYGYNNIPN (76 aa)). The Mg(2+) site is built by D454, D460, E463, and E464. One can recognise an FDX-ACB domain in the interval 701–794 (SKFPANRRDI…VSAQFGAALR (94 aa)).

Belongs to the phenylalanyl-tRNA synthetase beta subunit family. Type 1 subfamily. In terms of assembly, tetramer of two alpha and two beta subunits. It depends on Mg(2+) as a cofactor.

The protein localises to the cytoplasm. The catalysed reaction is tRNA(Phe) + L-phenylalanine + ATP = L-phenylalanyl-tRNA(Phe) + AMP + diphosphate + H(+). The chain is Phenylalanine--tRNA ligase beta subunit (pheT) from Vibrio cholerae serotype O1 (strain ATCC 39315 / El Tor Inaba N16961).